Consider the following 266-residue polypeptide: Large ribosomal subunit protein uL3 (266 aa).

A disordered region spans residues 124–149 (NQKIGPKSHGGGGGSKPVRQTGSLGD).

The protein belongs to the universal ribosomal protein uL3 family. Part of the 50S ribosomal subunit. Forms a cluster with proteins L14 and L19.

In terms of biological role, one of the primary rRNA binding proteins, it binds directly near the 3'-end of the 23S rRNA, where it nucleates assembly of the 50S subunit. This Mycoplasmopsis pulmonis (strain UAB CTIP) (Mycoplasma pulmonis) protein is Large ribosomal subunit protein uL3.